We begin with the raw amino-acid sequence, 190 residues long: 3-isopropylmalate dehydratase small subunit (190 aa).

Belongs to the LeuD family. LeuD type 1 subfamily. Heterodimer of LeuC and LeuD.

It catalyses the reaction (2R,3S)-3-isopropylmalate = (2S)-2-isopropylmalate. The protein operates within amino-acid biosynthesis; L-leucine biosynthesis; L-leucine from 3-methyl-2-oxobutanoate: step 2/4. Catalyzes the isomerization between 2-isopropylmalate and 3-isopropylmalate, via the formation of 2-isopropylmaleate. This Staphylococcus aureus (strain JH1) protein is 3-isopropylmalate dehydratase small subunit.